Reading from the N-terminus, the 135-residue chain is Fatty acid-binding protein 5 (135 aa).

An N-acetylalanine modification is found at A2. S3 is modified (phosphoserine). A Nuclear localization signal motif is present at residues 24–34; it reads KELGVGLALRK. 1-eicosanoylglycerol is bound by residues C43, T56, and R109. The cysteines at positions 120 and 127 are disulfide-linked. 129–131 contributes to the 1-eicosanoylglycerol binding site; it reads RVY. Residue 129–131 coordinates (9Z,12Z)-octadecadienoate; the sequence is RVY. Residue Y131 participates in hexadecanoate binding. Y131 is an N-eicosanoyl ethanolamine binding site. Position 131 is a phosphotyrosine (Y131).

It belongs to the calycin superfamily. Fatty-acid binding protein (FABP) family. Monomer. Widely expressed.

It localises to the cytoplasm. Its subcellular location is the nucleus. The protein localises to the synapse. It is found in the postsynaptic density. The protein resides in the secreted. The catalysed reaction is hexadecanoate(out) = hexadecanoate(in). The enzyme catalyses (9Z,12Z)-octadecadienoate(out) = (9Z,12Z)-octadecadienoate(in). It carries out the reaction (9Z)-octadecenoate(out) = (9Z)-octadecenoate(in). Its function is as follows. Intracellular carrier for long-chain fatty acids and related active lipids, such as endocannabinoids, that regulate the metabolism and actions of the ligands they bind. In addition to the cytosolic transport, selectively delivers specific fatty acids from the cytosol to the nucleus, wherein they activate nuclear receptors. Delivers retinoic acid to the nuclear receptor peroxisome proliferator-activated receptor delta; which promotes proliferation and survival. May also serve as a synaptic carrier of endocannabinoid at central synapses and thus controls retrograde endocannabinoid signaling. Modulates inflammation by regulating PTGES induction via NF-kappa-B activation, and prostaglandin E2 (PGE2) biosynthesis during inflammation. May be involved in keratinocyte differentiation. This is Fatty acid-binding protein 5 from Mus musculus (Mouse).